The chain runs to 300 residues: Peptidyl-prolyl cis-trans isomerase E (300 aa).

One can recognise an RRM domain in the interval 6 to 84 (RTIYVGGLAD…RTIRVNLAKP (79 aa)). Residues 142–298 (FFDIRIGGND…QKIVIYSCGE (157 aa)) form the PPIase cyclophilin-type domain.

Belongs to the cyclophilin-type PPIase family. PPIase E subfamily.

It is found in the nucleus. The enzyme catalyses [protein]-peptidylproline (omega=180) = [protein]-peptidylproline (omega=0). In terms of biological role, PPIases accelerate the folding of proteins. It catalyzes the cis-trans isomerization of proline imidic peptide bonds in oligopeptides. Combines RNA-binding and PPIase activities. The sequence is that of Peptidyl-prolyl cis-trans isomerase E (cyp33) from Drosophila melanogaster (Fruit fly).